The chain runs to 180 residues: Formate hydrogenlyase subunit 6 (180 aa).

4Fe-4S ferredoxin-type domains are found at residues 31–60 and 66–95; these read GKPE…VETD and LAWE…LSQE. Cysteine 40, cysteine 43, cysteine 46, cysteine 50, cysteine 75, cysteine 78, cysteine 81, and cysteine 85 together coordinate [4Fe-4S] cluster.

In terms of assembly, FHL comprises of a formate dehydrogenase, unidentified electron carriers and a hydrogenase (isoenzyme 3). In this non-energy conserving pathway, molecular hydrogen and carbodioxide are released from formate.

In terms of biological role, probable electron transfer protein for hydrogenase 3. This Escherichia coli (strain K12) protein is Formate hydrogenlyase subunit 6 (hycF).